A 236-amino-acid chain; its full sequence is Phosphoribosylaminoimidazole-succinocarboxamide synthase (236 aa).

The protein belongs to the SAICAR synthetase family.

The enzyme catalyses 5-amino-1-(5-phospho-D-ribosyl)imidazole-4-carboxylate + L-aspartate + ATP = (2S)-2-[5-amino-1-(5-phospho-beta-D-ribosyl)imidazole-4-carboxamido]succinate + ADP + phosphate + 2 H(+). It participates in purine metabolism; IMP biosynthesis via de novo pathway; 5-amino-1-(5-phospho-D-ribosyl)imidazole-4-carboxamide from 5-amino-1-(5-phospho-D-ribosyl)imidazole-4-carboxylate: step 1/2. This Chlorobium phaeobacteroides (strain BS1) protein is Phosphoribosylaminoimidazole-succinocarboxamide synthase.